A 160-amino-acid chain; its full sequence is Nucleotide-binding protein CPS_1098 (160 aa).

Belongs to the YajQ family.

In terms of biological role, nucleotide-binding protein. The chain is Nucleotide-binding protein CPS_1098 from Colwellia psychrerythraea (strain 34H / ATCC BAA-681) (Vibrio psychroerythus).